The primary structure comprises 516 residues: Putative transposase y4bL/y4kJ/y4tB (516 aa).

The HTH IS408-type domain maps to 15-96 (IRTILRLTHE…PDWALVVREL (82 aa)). Positions 138-319 (FRNRHAAGAV…SRRELFEEIE (182 aa)) constitute an Integrase catalytic domain. Residues 493–516 (ERPQAEHAAPTPAHTNIRGRSYYQ) are disordered.

It belongs to the transposase IS21/IS408/IS1162 family.

The sequence is that of Putative transposase y4bL/y4kJ/y4tB from Sinorhizobium fredii (strain NBRC 101917 / NGR234).